The chain runs to 93 residues: Probable Fe(2+)-trafficking protein (93 aa).

It belongs to the Fe(2+)-trafficking protein family.

Its function is as follows. Could be a mediator in iron transactions between iron acquisition and iron-requiring processes, such as synthesis and/or repair of Fe-S clusters in biosynthetic enzymes. In Polaromonas naphthalenivorans (strain CJ2), this protein is Probable Fe(2+)-trafficking protein.